The following is a 611-amino-acid chain: Protein Spindly-A (611 aa).

Residues Met1–Leu390 adopt a coiled-coil conformation. A disordered region spans residues Thr487–Gln611. Basic and acidic residues predominate over residues Thr493–Asp511. Polar residues predominate over residues His552–Asp567. The span at Ser570 to Lys583 shows a compositional bias: basic and acidic residues. Polar residues predominate over residues Pro602–Gln611.

Belongs to the Spindly family.

It localises to the chromosome. The protein localises to the centromere. Its subcellular location is the kinetochore. In terms of biological role, required for the localization of dynein and dynactin to the mitotic kintochore. Dynein is believed to control the initial lateral interaction between the kinetochore and spindle microtubules and to facilitate the subsequent formation of end-on kinetochore-microtubule attachments mediated by the NDC80 complex. The chain is Protein Spindly-A (spdl1-a) from Xenopus laevis (African clawed frog).